Here is a 355-residue protein sequence, read N- to C-terminus: Tryptophan--tRNA ligase (355 aa).

ATP is bound by residues 13–15 (QPT) and 21–22 (GN). The short motif at 14–22 (PTGNLHLGN) is the 'HIGH' region element. Residue Asp137 coordinates L-tryptophan. ATP contacts are provided by residues 149-151 (GED), Ile208, and 217-221 (KMSKS). A 'KMSKS' region motif is present at residues 217–221 (KMSKS).

Belongs to the class-I aminoacyl-tRNA synthetase family. In terms of assembly, homodimer.

The protein localises to the cytoplasm. It catalyses the reaction tRNA(Trp) + L-tryptophan + ATP = L-tryptophyl-tRNA(Trp) + AMP + diphosphate + H(+). Functionally, catalyzes the attachment of tryptophan to tRNA(Trp). This chain is Tryptophan--tRNA ligase, found in Brucella melitensis biotype 1 (strain ATCC 23456 / CCUG 17765 / NCTC 10094 / 16M).